Here is a 194-residue protein sequence, read N- to C-terminus: uncharacterized protein (194 aa).

The first 24 residues, 1-24 (MRKFVAFFVIVALAALLAGCGGQG), serve as a signal peptide directing secretion.

This is an uncharacterized protein from Archaeoglobus fulgidus (strain ATCC 49558 / DSM 4304 / JCM 9628 / NBRC 100126 / VC-16).